Reading from the N-terminus, the 383-residue chain is 1-deoxy-D-xylulose 5-phosphate reductoisomerase (383 aa).

The NADPH site is built by Thr-10, Gly-11, Ser-12, Ile-13, Gly-36, Lys-37, Asn-38, and Asn-122. Lys-123 serves as a coordination point for 1-deoxy-D-xylulose 5-phosphate. Glu-124 lines the NADPH pocket. Residue Asp-148 coordinates Mn(2+). Ser-149, Glu-150, Ser-174, and His-197 together coordinate 1-deoxy-D-xylulose 5-phosphate. Glu-150 is a Mn(2+) binding site. Residue Gly-203 coordinates NADPH. Residues Ser-210, Asn-215, Lys-216, and Glu-219 each coordinate 1-deoxy-D-xylulose 5-phosphate. Residue Glu-219 coordinates Mn(2+).

Belongs to the DXR family. Requires Mg(2+) as cofactor. It depends on Mn(2+) as a cofactor.

It carries out the reaction 2-C-methyl-D-erythritol 4-phosphate + NADP(+) = 1-deoxy-D-xylulose 5-phosphate + NADPH + H(+). Its pathway is isoprenoid biosynthesis; isopentenyl diphosphate biosynthesis via DXP pathway; isopentenyl diphosphate from 1-deoxy-D-xylulose 5-phosphate: step 1/6. In terms of biological role, catalyzes the NADPH-dependent rearrangement and reduction of 1-deoxy-D-xylulose-5-phosphate (DXP) to 2-C-methyl-D-erythritol 4-phosphate (MEP). The chain is 1-deoxy-D-xylulose 5-phosphate reductoisomerase from Bacillus licheniformis (strain ATCC 14580 / DSM 13 / JCM 2505 / CCUG 7422 / NBRC 12200 / NCIMB 9375 / NCTC 10341 / NRRL NRS-1264 / Gibson 46).